The primary structure comprises 105 residues: Small ribosomal subunit protein eS10B (105 aa).

It belongs to the eukaryotic ribosomal protein eS10 family. As to quaternary structure, component of the small ribosomal subunit (SSU). Mature yeast ribosomes consist of a small (40S) and a large (60S) subunit. The 40S small subunit contains 1 molecule of ribosomal RNA (18S rRNA) and 33 different proteins (encoded by 57 genes). The large 60S subunit contains 3 rRNA molecules (25S, 5.8S and 5S rRNA) and 46 different proteins (encoded by 81 genes). eS10 interacts with GCN1 (via middle region); this interaction is direct and promotes GCN2 kinase activity. Post-translationally, the N-terminus is not modified.

The protein localises to the cytoplasm. In terms of biological role, component of the ribosome, a large ribonucleoprotein complex responsible for the synthesis of proteins in the cell. The small ribosomal subunit (SSU) binds messenger RNAs (mRNAs) and translates the encoded message by selecting cognate aminoacyl-transfer RNA (tRNA) molecules. The large subunit (LSU) contains the ribosomal catalytic site termed the peptidyl transferase center (PTC), which catalyzes the formation of peptide bonds, thereby polymerizing the amino acids delivered by tRNAs into a polypeptide chain. The nascent polypeptides leave the ribosome through a tunnel in the LSU and interact with protein factors that function in enzymatic processing, targeting, and the membrane insertion of nascent chains at the exit of the ribosomal tunnel. eS10 plays a role as a positive regulator of the GCN2 kinase activity by stimulating GCN1-mediated GCN2 activation. This chain is Small ribosomal subunit protein eS10B, found in Saccharomyces cerevisiae (strain ATCC 204508 / S288c) (Baker's yeast).